The sequence spans 261 residues: uncharacterized protein (261 aa).

Positions 1 to 22 (MGYSKRFALYISVMILIFAIAG) are cleaved as a signal peptide. The N-palmitoyl cysteine moiety is linked to residue Cys23. Cys23 carries S-diacylglycerol cysteine lipidation.

It belongs to the staphylococcal tandem lipoprotein family.

The protein resides in the cell membrane. This is an uncharacterized protein from Staphylococcus aureus (strain N315).